A 416-amino-acid polypeptide reads, in one-letter code: RNA polymerase sigma factor SigA (416 aa).

Residues 184-254 (MVQSNLRLVV…TRAIADQSRT (71 aa)) are sigma-70 factor domain-2. The short motif at 208–211 (DLIQ) is the Interaction with polymerase core subunit RpoC element. The sigma-70 factor domain-3 stretch occupies residues 263-338 (ETISRIKKTT…EADGETPEDE (76 aa)). The interval 351 to 404 (VLDTLSPRERDVLRLRYGLDDGRMKTLEEIGQIFNVTRERIRQIEAKALRKLRH) is sigma-70 factor domain-4. The H-T-H motif DNA-binding region spans 377-396 (LEEIGQIFNVTRERIRQIEA).

Belongs to the sigma-70 factor family. RpoD/SigA subfamily. As to quaternary structure, interacts transiently with the RNA polymerase catalytic core.

The protein resides in the cytoplasm. Sigma factors are initiation factors that promote the attachment of RNA polymerase to specific initiation sites and are then released. This sigma factor is the primary sigma factor during exponential growth. In Microcystis aeruginosa, this protein is RNA polymerase sigma factor SigA.